Here is a 257-residue protein sequence, read N- to C-terminus: Receptor expression-enhancing protein 4 (257 aa).

Helical transmembrane passes span 1 to 21 and 42 to 62; these read MVSW…YPAY and WIVF…ISWF. Residues Ser152 and Ser194 each carry the phosphoserine modification. The segment at 159-257 is disordered; it reads IPDTSAPTYQ…KKTIPSDLDS (99 aa). Residue Thr196 is modified to Phosphothreonine. At Ser202 the chain carries Phosphoserine. Thr250 is modified (phosphothreonine). Position 253 is a phosphoserine (Ser253).

Belongs to the DP1 family.

It localises to the endoplasmic reticulum membrane. In terms of biological role, microtubule-binding protein required to ensure proper cell division and nuclear envelope reassembly by sequestering the endoplasmic reticulum away from chromosomes during mitosis. Probably acts by clearing the endoplasmic reticulum membrane from metaphase chromosomes. This Rattus norvegicus (Rat) protein is Receptor expression-enhancing protein 4 (Reep4).